A 983-amino-acid polypeptide reads, in one-letter code: Seizure protein 6 homolog (983 aa).

A signal peptide spans 1-19 (MRPAALLLLPSLLALLVHG). 2 disordered regions span residues 80–132 (GQEK…WSLE) and 148–194 (PGMA…QTTG). The span at 101 to 112 (NQDSRPVFTSPT) shows a compositional bias: polar residues. The segment covering 154–167 (TPGPGERPNTPPPS) has biased composition (pro residues). The N-linked (GlcNAc...) asparagine glycan is linked to Asn-278. The Sushi 1 domain maps to 344–403 (LSCHFPRRPAYGAVTVTSLHPGGSARFRCATGYQLKGARLLTCLNATQPFWDSQEPVCIA). 12 disulfides stabilise this stretch: Cys-346-Cys-386, Cys-372-Cys-401, Cys-405-Cys-432, Cys-521-Cys-563, Cys-548-Cys-578, Cys-582-Cys-608, Cys-699-Cys-741, Cys-727-Cys-754, Cys-760-Cys-802, Cys-788-Cys-819, Cys-827-Cys-869, and Cys-855-Cys-884. 3 N-linked (GlcNAc...) asparagine glycosylation sites follow: Asn-388, Asn-425, and Asn-530. The 112-residue stretch at 405-516 (CGGVIRNATT…AGMALRYEAF (112 aa)) folds into the CUB 1 domain. A Sushi 2 domain is found at 519 to 580 (GHCYEPFVKY…WNETEPACRA (62 aa)). The CUB 2 domain maps to 582–693 (CSGETTDSAG…QGFVIHFFEV (112 aa)). Sushi domains follow at residues 697–756 (DTCP…SCQR), 758–821 (TSCL…KCLL), and 825–886 (KPCH…ICRA). The helical transmembrane segment at 915–935 (LAAAIFLPLVAMALLVGGVYL) threads the bilayer.

It belongs to the SEZ6 family.

The protein localises to the cell membrane. Its function is as follows. May play a role in cell-cell recognition and in neuronal membrane signaling. Seems to be important for the achievement of the necessary balance between dendrite elongation and branching during the elaboration of a complex dendritic arbor. Involved in the development of appropriate excitatory synaptic connectivity. This chain is Seizure protein 6 homolog (SEZ6), found in Bos taurus (Bovine).